We begin with the raw amino-acid sequence, 199 residues long: Probable thymidylate kinase (199 aa).

An ATP-binding site is contributed by 9-16 (GIDGCGKT).

The protein belongs to the thymidylate kinase family.

It catalyses the reaction dTMP + ATP = dTDP + ADP. This is Probable thymidylate kinase from Methanococcus maripaludis (strain C6 / ATCC BAA-1332).